The primary structure comprises 178 residues: Large ribosomal subunit protein uL5 (178 aa).

Belongs to the universal ribosomal protein uL5 family. As to quaternary structure, part of the 50S ribosomal subunit; part of the 5S rRNA/L5/L18/L25 subcomplex. Contacts the 5S rRNA and the P site tRNA. Forms a bridge to the 30S subunit in the 70S ribosome.

Its function is as follows. This is one of the proteins that bind and probably mediate the attachment of the 5S RNA into the large ribosomal subunit, where it forms part of the central protuberance. In the 70S ribosome it contacts protein S13 of the 30S subunit (bridge B1b), connecting the 2 subunits; this bridge is implicated in subunit movement. Contacts the P site tRNA; the 5S rRNA and some of its associated proteins might help stabilize positioning of ribosome-bound tRNAs. This Wolbachia pipientis subsp. Culex pipiens (strain wPip) protein is Large ribosomal subunit protein uL5.